A 367-amino-acid polypeptide reads, in one-letter code: Protein RecA (367 aa).

73-80 (GPESSGKT) lines the ATP pocket. Positions 345-367 (DEPVAKKASAKESKEAKELKEVE) are disordered.

It belongs to the RecA family.

The protein localises to the cytoplasm. Its function is as follows. Can catalyze the hydrolysis of ATP in the presence of single-stranded DNA, the ATP-dependent uptake of single-stranded DNA by duplex DNA, and the ATP-dependent hybridization of homologous single-stranded DNAs. It interacts with LexA causing its activation and leading to its autocatalytic cleavage. This Herminiimonas arsenicoxydans protein is Protein RecA.